Consider the following 468-residue polypeptide: 6-phosphogluconate dehydrogenase, decarboxylating (468 aa).

NADP(+) is bound by residues Gly-10–Gly-15, Asn-33–Ser-35, Val-74–Ala-76, and Asn-102. Residues Asn-102 and Ser-128–Gly-130 contribute to the substrate site. Lys-183 (proton acceptor) is an active-site residue. Residue His-186–Asn-187 participates in substrate binding. Glu-190 serves as the catalytic Proton donor. Residues Tyr-191, Lys-260, Arg-287, Arg-445, and His-451 each contribute to the substrate site.

The protein belongs to the 6-phosphogluconate dehydrogenase family. As to quaternary structure, homodimer.

It catalyses the reaction 6-phospho-D-gluconate + NADP(+) = D-ribulose 5-phosphate + CO2 + NADPH. It participates in carbohydrate degradation; pentose phosphate pathway; D-ribulose 5-phosphate from D-glucose 6-phosphate (oxidative stage): step 3/3. Its function is as follows. Catalyzes the oxidative decarboxylation of 6-phosphogluconate to ribulose 5-phosphate and CO(2), with concomitant reduction of NADP to NADPH. The sequence is that of 6-phosphogluconate dehydrogenase, decarboxylating (gnd) from Salmonella typhimurium (strain LT2 / SGSC1412 / ATCC 700720).